The sequence spans 493 residues: EGF-containing fibulin-like extracellular matrix protein 1 (493 aa).

The N-terminal stretch at 1-17 is a signal peptide; sequence MLQTLFLTMLTLALVKS. The EGF-like 1; atypical domain maps to 26 to 71; sequence YTQCTDGYEWDPIRQQCKDIDECDIVPDACKGGMKCVNHYGGYLCL. Residues 173–213 enclose the EGF-like 2; calcium-binding domain; it reads DIDECTSGTHNCRTDQVCINLRGSFTCQCLPGYQKRGEQCV. Intrachain disulfides connect C177–C190, C184–C199, C201–C212, C218–C228, C224–C237, C239–C252, C258–C268, C264–C277, C279–C292, C298–C309, C305–C318, C320–C332, C338–C350, C344–C359, and C365–C377. The 40-residue stretch at 214–253 folds into the EGF-like 3; calcium-binding domain; sequence DIDECTVPPYCHQRCVNTPGSFYCQCSPGFQLAANNYTCV. An N-linked (GlcNAc...) asparagine glycan is attached at N249. Residues 254–293 enclose the EGF-like 4; calcium-binding domain; sequence DINECDASNQCAQQCYNILGSFICQCNQGYELSSDRLNCE. The segment at 259 to 493 is mediates interaction with TIMP3; the sequence is DASNQCAQQC…LTIIVGPFSF (235 aa). The region spanning 294 to 333 is the EGF-like 5; calcium-binding domain; the sequence is DIDECRTSSYLCQYQCVNEPGKFSCMCPQGYEVVRSRTCQ. In terms of domain architecture, EGF-like 6; calcium-binding spans 334–378; it reads DINECETTNECREDEMCWNYHGGFRCYPRNPCQDHYVLTSENRCV.

This sequence belongs to the fibulin family. As to quaternary structure, interacts with ECM1. Interacts with TIMP3. Expressed in the eye in the ciliary body, cornea, inner nuclear layer of the retina, and in the optic disk.

It is found in the secreted. It localises to the extracellular space. The protein localises to the extracellular matrix. Binds EGFR, the EGF receptor, inducing EGFR autophosphorylation and the activation of downstream signaling pathways. May play a role in cell adhesion and migration. May function as a negative regulator of chondrocyte differentiation. In the olfactory epithelium, it may regulate glial cell migration, differentiation and the ability of glial cells to support neuronal neurite outgrowth. The chain is EGF-containing fibulin-like extracellular matrix protein 1 (Efemp1) from Mus musculus (Mouse).